A 607-amino-acid polypeptide reads, in one-letter code: MVRHQPLQYYEPQLCLSCLTGIYGCRWKRYQRSHDDTTPWERLWFLLLVCTFSLTLTWLYFWWGVHNDYDEFNWYLYNRMGYWSDWSVPILVTSAAAFTYIAGLLVLALCHIAVGQQLNLHWIHKMGLVVILASTVVAMSAVAQLWEDEWEVLLISLQGTAPFLHIGALVAITALSWIVAGQFARAERSSSQLTILCTFFAVVFTFYLIPLTISSPCIMEKKDLGPKPALIGHRGAPMLAPEHTVMSFRKALEQRLYGLQADITISLDGVPFLMHDTTLRRTTNVEHLFPELARRPAAMLNWTVLQRLNAGQWFLKTDPFWTASSLSPSDHREVQNQSICSLAELLELAKGNASLLLNLRDPPRDHPYRGSFLNVTLEAVLRSGFPQHQVMWLFNRQRPLVRKMAPGFQQTSGSKEAIANLRKGHIQKLNLRYTQVSHQELRDYASWNLSVNLYTVNAPWLFSLLWCAGVPSVTSDNSHTLSRVPSPLWIMPPDEYCLMWVTADLISFSLIIGIFVLQKWRLGGIRSYNPEQIMLSAAVRRTSRDVSIMKEKLIFSEISDGVEVSDELSVCSDSSYDTYANANSTATPVGPRNAGSRAKTVTEQSGH.

Over 1–42 (MVRHQPLQYYEPQLCLSCLTGIYGCRWKRYQRSHDDTTPWER) the chain is Cytoplasmic. 2 disulfides stabilise this stretch: cysteine 15–cysteine 18 and cysteine 25–cysteine 571. A helical transmembrane segment spans residues 43–63 (LWFLLLVCTFSLTLTWLYFWW). At 64–89 (GVHNDYDEFNWYLYNRMGYWSDWSVP) the chain is on the extracellular side. The chain crosses the membrane as a helical span at residues 90–110 (ILVTSAAAFTYIAGLLVLALC). At 111-125 (HIAVGQQLNLHWIHK) the chain is on the cytoplasmic side. Residues 126-146 (MGLVVILASTVVAMSAVAQLW) form a helical membrane-spanning segment. The Extracellular segment spans residues 147–160 (EDEWEVLLISLQGT). A helical membrane pass occupies residues 161-181 (APFLHIGALVAITALSWIVAG). At 182-192 (QFARAERSSSQ) the chain is on the cytoplasmic side. A helical membrane pass occupies residues 193-213 (LTILCTFFAVVFTFYLIPLTI). At 214–496 (SSPCIMEKKD…PLWIMPPDEY (283 aa)) the chain is on the extracellular side. One can recognise a GP-PDE domain in the interval 228 to 485 (PALIGHRGAP…DNSHTLSRVP (258 aa)). N-linked (GlcNAc...) asparagine glycans are attached at residues asparagine 301, asparagine 336, asparagine 352, asparagine 374, and asparagine 448. A helical transmembrane segment spans residues 497–517 (CLMWVTADLISFSLIIGIFVL). Topologically, residues 518 to 607 (QKWRLGGIRS…AKTVTEQSGH (90 aa)) are cytoplasmic. A disordered region spans residues 582-607 (ANSTATPVGPRNAGSRAKTVTEQSGH).

It belongs to the glycerophosphoryl diester phosphodiesterase family. Interacts with PRDX1; forms a mixed-disulfide with PRDX1, leading to disrupt intramolecular disulfide bond between Cys-25 and Cys-571. Intramolecular disulfide bond between Cys-25 and Cys-571 is reduced by PRDX1. Detected in brain, lung, heart, kidney and testis.

The protein localises to the endomembrane system. The protein resides in the cytoplasm. It localises to the perinuclear region. Its subcellular location is the cell projection. It is found in the growth cone. The enzyme catalyses a 1,2-diacyl-sn-glycero-3-phospho-(1D-myo-inositol-4,5-bisphosphate) + H2O = 1D-myo-inositol 1,4,5-trisphosphate + a 1,2-diacyl-sn-glycerol + H(+). It catalyses the reaction sn-glycerol 3-phosphocholine + H2O = sn-glycerol 3-phosphate + choline + H(+). Inhibited by high level of NaCl or urea. Functionally, glycerophosphodiester phosphodiesterase that promotes neurite formation and drives spinal motor neuron differentiation. Mediates the cleavage of glycosylphosphatidylinositol (GPI) anchor of target proteins: removes the GPI-anchor of RECK, leading to release RECK from the plasma membrane. May contribute to the osmotic regulation of cellular glycerophosphocholine. This Mus musculus (Mouse) protein is Glycerophosphodiester phosphodiesterase domain-containing protein 5.